The following is a 378-amino-acid chain: Probable pectin lyase A (378 aa).

Residues Met1–Ala19 form the signal peptide. 2 disulfides stabilise this stretch: Cys82-Cys101 and Cys91-Cys225. Arg255 is a catalytic residue. The cysteines at positions 321 and 329 are disulfide-linked.

The protein belongs to the polysaccharide lyase 1 family.

It is found in the secreted. It carries out the reaction Eliminative cleavage of (1-&gt;4)-alpha-D-galacturonan methyl ester to give oligosaccharides with 4-deoxy-6-O-methyl-alpha-D-galact-4-enuronosyl groups at their non-reducing ends.. Functionally, pectinolytic enzymes consist of four classes of enzymes: pectin lyase, polygalacturonase, pectin methylesterase and rhamnogalacturonase. Among pectinolytic enzymes, pectin lyase is the most important in depolymerization of pectin, since it cleaves internal glycosidic bonds of highly methylated pectins. The chain is Probable pectin lyase A (pelA) from Aspergillus terreus (strain NIH 2624 / FGSC A1156).